A 495-amino-acid chain; its full sequence is YTH domain-containing protein ECT3 (495 aa).

The YTH domain occupies 261 to 398 (AKFYVIKSYS…EQGIKVIKIF (138 aa)). RNA-binding positions include 267-269 (KSY), Asp-273, 283-284 (WS), Asn-316, Trp-340, Trp-345, and Trp-353.

Expressed in the shoot apex, at the sites of leaf formation, and in emerging leaves.

Its subcellular location is the cytoplasm. In terms of biological role, specifically recognizes and binds N6-methyladenosine (m6A)-containing RNAs, and regulates mRNA stability. M6A is a modification present at internal sites of mRNAs and some non-coding RNAs and plays a role in mRNA stability and processing. Required for the correct timing of leaf formation and normal leaf morphology. Required for proper trichome branching and morphology. Functions redundantly with ECT2. This Arabidopsis thaliana (Mouse-ear cress) protein is YTH domain-containing protein ECT3.